The following is a 527-amino-acid chain: Proline--tRNA ligase (527 aa).

This sequence belongs to the class-II aminoacyl-tRNA synthetase family. ProS type 3 subfamily. As to quaternary structure, homodimer.

The protein resides in the cytoplasm. The enzyme catalyses tRNA(Pro) + L-proline + ATP = L-prolyl-tRNA(Pro) + AMP + diphosphate. Catalyzes the attachment of proline to tRNA(Pro) in a two-step reaction: proline is first activated by ATP to form Pro-AMP and then transferred to the acceptor end of tRNA(Pro). The protein is Proline--tRNA ligase of Sphingopyxis alaskensis (strain DSM 13593 / LMG 18877 / RB2256) (Sphingomonas alaskensis).